The following is a 465-amino-acid chain: Cysteine--tRNA ligase (465 aa).

Cys27 serves as a coordination point for Zn(2+). The 'HIGH' region motif lies at 29-39; the sequence is PTVYNFFHIGN. Positions 207, 232, and 236 each coordinate Zn(2+). The 'KMSKS' region signature appears at 264-268; the sequence is KMSKS. Lys267 contacts ATP.

This sequence belongs to the class-I aminoacyl-tRNA synthetase family. Monomer. It depends on Zn(2+) as a cofactor.

The protein resides in the cytoplasm. It carries out the reaction tRNA(Cys) + L-cysteine + ATP = L-cysteinyl-tRNA(Cys) + AMP + diphosphate. The polypeptide is Cysteine--tRNA ligase (Clostridium botulinum (strain Loch Maree / Type A3)).